Here is a 97-residue protein sequence, read N- to C-terminus: Sec-independent protein translocase protein TatA (97 aa).

A helical transmembrane segment spans residues 1–21 (MGFNIWSLLIILLIVALLFGT). The interval 28-97 (GGDLGGAIRG…SAEHHDRSTS (70 aa)) is disordered. Over residues 37–56 (GFKESMREGEEEEAQKRADG) the composition is skewed to basic and acidic residues. Low complexity predominate over residues 78-87 (QARESSSARQ). Residues 88 to 97 (SAEHHDRSTS) are compositionally biased toward basic and acidic residues.

This sequence belongs to the TatA/E family. In terms of assembly, the Tat system comprises two distinct complexes: a TatABC complex, containing multiple copies of TatA, TatB and TatC subunits, and a separate TatA complex, containing only TatA subunits. Substrates initially bind to the TatABC complex, which probably triggers association of the separate TatA complex to form the active translocon.

The protein localises to the cell inner membrane. Its function is as follows. Part of the twin-arginine translocation (Tat) system that transports large folded proteins containing a characteristic twin-arginine motif in their signal peptide across membranes. TatA could form the protein-conducting channel of the Tat system. The polypeptide is Sec-independent protein translocase protein TatA (Halorhodospira halophila (strain DSM 244 / SL1) (Ectothiorhodospira halophila (strain DSM 244 / SL1))).